Consider the following 120-residue polypeptide: Large ribosomal subunit protein bL12 (120 aa).

This sequence belongs to the bacterial ribosomal protein bL12 family. In terms of assembly, homodimer. Part of the ribosomal stalk of the 50S ribosomal subunit. Forms a multimeric L10(L12)X complex, where L10 forms an elongated spine to which 2 to 4 L12 dimers bind in a sequential fashion. Binds GTP-bound translation factors.

In terms of biological role, forms part of the ribosomal stalk which helps the ribosome interact with GTP-bound translation factors. Is thus essential for accurate translation. The polypeptide is Large ribosomal subunit protein bL12 (Shouchella clausii (strain KSM-K16) (Alkalihalobacillus clausii)).